The sequence spans 201 residues: Large ribosomal subunit protein uL4 (201 aa).

Positions 44–68 are disordered; sequence KAQKTRSEVAGTTKKSKKQKGGGAR.

Belongs to the universal ribosomal protein uL4 family. Part of the 50S ribosomal subunit.

Functionally, one of the primary rRNA binding proteins, this protein initially binds near the 5'-end of the 23S rRNA. It is important during the early stages of 50S assembly. It makes multiple contacts with different domains of the 23S rRNA in the assembled 50S subunit and ribosome. In terms of biological role, forms part of the polypeptide exit tunnel. This chain is Large ribosomal subunit protein uL4, found in Xanthomonas campestris pv. campestris (strain 8004).